Here is an 87-residue protein sequence, read N- to C-terminus: HssA/B-like protein 57 (87 aa).

This sequence belongs to the hssA/B family.

The polypeptide is HssA/B-like protein 57 (hssl57) (Dictyostelium discoideum (Social amoeba)).